Reading from the N-terminus, the 207-residue chain is Ribosomal RNA small subunit methyltransferase G (207 aa).

S-adenosyl-L-methionine-binding positions include G73, L78, 124 to 125, and R139; that span reads VE.

The protein belongs to the methyltransferase superfamily. RNA methyltransferase RsmG family.

Its subcellular location is the cytoplasm. The enzyme catalyses guanosine(527) in 16S rRNA + S-adenosyl-L-methionine = N(7)-methylguanosine(527) in 16S rRNA + S-adenosyl-L-homocysteine. Its function is as follows. Specifically methylates the N7 position of guanine in position 527 of 16S rRNA. This chain is Ribosomal RNA small subunit methyltransferase G, found in Shigella dysenteriae serotype 1 (strain Sd197).